The sequence spans 344 residues: L-sulfolactate dehydrogenase (344 aa).

This sequence belongs to the LDH2/MDH2 oxidoreductase family.

Its subcellular location is the cytoplasm. The catalysed reaction is a (2S)-2-hydroxycarboxylate + NAD(+) = a 2-oxocarboxylate + NADH + H(+). It participates in cofactor biosynthesis; coenzyme M biosynthesis; sulfoacetaldehyde from phosphoenolpyruvate and sulfite: step 3/4. Its pathway is cofactor biosynthesis; 5,6,7,8-tetrahydromethanopterin biosynthesis. Functionally, catalyzes the reduction of sulfopyruvate to (R)-sulfolactate much more efficiently than the reverse reaction. Also catalyzes the reduction of oxaloacetate, alpha-ketoglutarate, and to a much lower extent, KHTCA, but not pyruvate. Involved in the biosynthesis of both coenzyme M (with (R)-sulfolactate) and methanopterin (with alpha-ketoglutarate). The polypeptide is L-sulfolactate dehydrogenase (comC) (Methanocaldococcus jannaschii (strain ATCC 43067 / DSM 2661 / JAL-1 / JCM 10045 / NBRC 100440) (Methanococcus jannaschii)).